The chain runs to 185 residues: AP-3 complex subunit sigma (185 aa).

Belongs to the adaptor complexes small subunit family. Adaptor protein complex 3 (AP-3) is a heterotetramer composed of 2 large adaptins (APL5 and APL6), a medium adaptin (APM3) and a small adaptin (APS3).

Its subcellular location is the golgi apparatus. It localises to the cytoplasmic vesicle membrane. Functionally, part of the AP-3 complex, an adaptor-related complex which is not clathrin-associated. The complex is associated with the Golgi region as well as more peripheral structures. It facilitates the budding of vesicles from the Golgi membrane and may be directly involved in trafficking to the vacuole. This is AP-3 complex subunit sigma (APS3) from Eremothecium gossypii (strain ATCC 10895 / CBS 109.51 / FGSC 9923 / NRRL Y-1056) (Yeast).